Reading from the N-terminus, the 49-residue chain is MRVQVGLKCEECGNRNYYTTKEKSKKDKLRLKKYCPKCNKHTFHTETKV.

Belongs to the bacterial ribosomal protein bL33 family.

In Fervidobacterium nodosum (strain ATCC 35602 / DSM 5306 / Rt17-B1), this protein is Large ribosomal subunit protein bL33.